Consider the following 401-residue polypeptide: Argininosuccinate synthase (401 aa).

ATP is bound at residue 8 to 16 (AYSGGLDTS). An L-citrulline-binding site is contributed by tyrosine 85. Glycine 115 provides a ligand contact to ATP. L-aspartate is bound by residues threonine 117, asparagine 121, and aspartate 122. Asparagine 121 is a binding site for L-citrulline. The L-citrulline site is built by arginine 125, serine 173, serine 182, glutamate 258, and tyrosine 270.

The protein belongs to the argininosuccinate synthase family. Type 1 subfamily. In terms of assembly, homotetramer.

It is found in the cytoplasm. It carries out the reaction L-citrulline + L-aspartate + ATP = 2-(N(omega)-L-arginino)succinate + AMP + diphosphate + H(+). The protein operates within amino-acid biosynthesis; L-arginine biosynthesis; L-arginine from L-ornithine and carbamoyl phosphate: step 2/3. The protein is Argininosuccinate synthase of Staphylococcus saprophyticus subsp. saprophyticus (strain ATCC 15305 / DSM 20229 / NCIMB 8711 / NCTC 7292 / S-41).